We begin with the raw amino-acid sequence, 247 residues long: C-type lectin domain family 7 member A (247 aa).

The Cytoplasmic segment spans residues 1–44; sequence MEYHPDLENLDEDGYTQLHFDSRSNTRIAVVSEKGSCVASPPWR. The ITAM-like signature appears at 15–18; sequence YTQL. Residues 45–65 traverse the membrane as a helical; Signal-anchor for type II membrane protein segment; it reads LIAVILGILCLVILVIAVVLG. At 66–247 the chain is on the extracellular side; sequence TMAIWRPNSG…CSICEKKFSM (182 aa). The segment at 81 to 105 is disordered; sequence NGYFPSRNKENHSQPTQSPLEESVT. N91 carries an N-linked (GlcNAc...) asparagine glycan. Polar residues predominate over residues 93–105; sequence SQPTQSPLEESVT. 3 cysteine pairs are disulfide-bonded: C120-C131, C148-C241, and C220-C233. Positions 127-242 constitute a C-type lectin domain; it reads YEKSCYLFSP…CSVPSCSICE (116 aa). 146-153 is a (1,3-beta-D-glucosyl)n binding site; sequence RQCSQLGS. K157, D159, and E163 together coordinate a divalent metal cation. E195 contacts (1,3-beta-D-glucosyl)n. A divalent metal cation is bound at residue E242.

As to quaternary structure, homodimer. Interacts with SYK; participates in leukocyte activation in presence of fungal pathogens. Interacts with CD37; this interaction controls CLEC7A-mediated IL-6 production. Phosphorylated on tyrosine residues in response to beta-glucan binding. In terms of tissue distribution, detected in dendritic cells, in paracortical and medullary regions of lymph nodes, and in spleen red pulp and white pulp.

The protein localises to the cell membrane. Functionally, lectin that functions as a pattern recognizing receptor (PRR) specific for beta-1,3-linked and beta-1,6-linked glucans, which constitute cell wall constituents from pathogenic bacteria and fungi. Necessary for the TLR2-mediated inflammatory response and activation of NF-kappa-B: upon beta-glucan binding, recruits SYK via its ITAM motif and promotes a signaling cascade that activates some CARD domain-BCL10-MALT1 (CBM) signalosomes, leading to the activation of NF-kappa-B and MAP kinase p38 (MAPK11, MAPK12, MAPK13 and/or MAPK14) pathways which stimulate expression of genes encoding pro-inflammatory cytokines and chemokines. Enhances cytokine production in macrophages and dendritic cells. Mediates production of reactive oxygen species in the cell. Mediates phagocytosis of C.albicans conidia. Binds T-cells in a way that does not involve their surface glycans and plays a role in T-cell activation. Stimulates T-cell proliferation. Induces phosphorylation of SCIMP after binding beta-glucans. This Macaca mulatta (Rhesus macaque) protein is C-type lectin domain family 7 member A (CLEC7A).